A 543-amino-acid polypeptide reads, in one-letter code: Glucose-6-phosphate isomerase (543 aa).

Glutamate 353 functions as the Proton donor in the catalytic mechanism. Residues histidine 384 and lysine 504 contribute to the active site.

The protein belongs to the GPI family.

The protein localises to the cytoplasm. The enzyme catalyses alpha-D-glucose 6-phosphate = beta-D-fructose 6-phosphate. It participates in carbohydrate biosynthesis; gluconeogenesis. Its pathway is carbohydrate degradation; glycolysis; D-glyceraldehyde 3-phosphate and glycerone phosphate from D-glucose: step 2/4. Its function is as follows. Catalyzes the reversible isomerization of glucose-6-phosphate to fructose-6-phosphate. The protein is Glucose-6-phosphate isomerase of Roseiflexus sp. (strain RS-1).